Consider the following 874-residue polypeptide: Leucine--tRNA ligase (874 aa).

The short motif at 43 to 53 (PYPSGRIHIGH) is the 'HIGH' region element. Residues 630–634 (KMSKS) carry the 'KMSKS' region motif. Residue K633 coordinates ATP.

Belongs to the class-I aminoacyl-tRNA synthetase family.

The protein resides in the cytoplasm. The catalysed reaction is tRNA(Leu) + L-leucine + ATP = L-leucyl-tRNA(Leu) + AMP + diphosphate. This Bradyrhizobium sp. (strain BTAi1 / ATCC BAA-1182) protein is Leucine--tRNA ligase.